A 407-amino-acid chain; its full sequence is Substance-P receptor (407 aa).

The Extracellular segment spans residues 1–31; sequence MDNVLPVDSDLFPNISTNTSEPNQFVQPAWQ. Residues Asn-14 and Asn-18 are each glycosylated (N-linked (GlcNAc...) asparagine). The helical transmembrane segment at 32–54 threads the bilayer; the sequence is IVLWAAAYTVIVVTSVVGNVVVM. The Cytoplasmic portion of the chain corresponds to 55–64; sequence WIILAHKRMR. The chain crosses the membrane as a helical span at residues 65 to 86; sequence TVTNYFLVNLAFAEASMAAFNT. Residues 87–106 are Extracellular-facing; sequence VVNFTYAVHNEWYYGLFYCK. A disulfide bridge connects residues Cys-105 and Cys-180. The chain crosses the membrane as a helical span at residues 107 to 128; that stretch reads FHNFFPIAAVFASIYSMTAVAF. At 129-148 the chain is on the cytoplasmic side; that stretch reads DRYMAIIHPLQPRLSATATK. A helical transmembrane segment spans residues 149–169; it reads VVICVIWVLALLLAFPQGYYS. Residues 170 to 194 lie on the Extracellular side of the membrane; sequence TTETMPGRVVCMIEWPSHPDKIYEK. Residues 195-219 form a helical membrane-spanning segment; that stretch reads VYHICVTVLIYFLPLLVIGYAYTVV. The Cytoplasmic segment spans residues 220–248; sequence GITLWASEIPGDSSDRYHEQVSAKRKVVK. Residues 249–270 traverse the membrane as a helical segment; that stretch reads MMIVVVCTFAICWLPFHIFFLL. The Extracellular segment spans residues 271–283; the sequence is PYINPDLYLKKFI. A helical membrane pass occupies residues 284–308; that stretch reads QQVYLAIMWLAMSSTMYNPIIYCCL. Residues 309–407 are Cytoplasmic-facing; the sequence is NDRFRLGFKH…SSSFYSNMLS (99 aa). Residue Cys-322 is the site of S-palmitoyl cysteine attachment. The disordered stretch occupies residues 363 to 407; that stretch reads GAHEEDPEEGPKATPSSLDLTSNGSSRSNSKTVTESSSFYSNMLS. Over residues 376–407 the composition is skewed to polar residues; sequence TPSSLDLTSNGSSRSNSKTVTESSSFYSNMLS.

Belongs to the G-protein coupled receptor 1 family. In terms of assembly, interacts with ARRB1.

The protein resides in the cell membrane. This is a receptor for the tachykinin neuropeptide substance P. It is probably associated with G proteins that activate a phosphatidylinositol-calcium second messenger system. The rank order of affinity of this receptor to tachykinins is: substance P &gt; substance K &gt; neuromedin-K. This chain is Substance-P receptor (TACR1), found in Cavia porcellus (Guinea pig).